Consider the following 825-residue polypeptide: E3 ubiquitin-protein ligase ICP0 (825 aa).

The span at 1–10 (MEPRPGTSSR) shows a compositional bias: polar residues. A disordered region spans residues 1-121 (MEPRPGTSSR…VGEEEAEAGG (121 aa)). Positions 46–57 (DSEEETEVGISD) are enriched in acidic residues. Residues 126-167 (CAVCTDEIAPPLRCQSFPCLHPFCIPCMKTWIPLRNTCPLCN) form an RING-type zinc finger. 3 disordered regions span residues 221–312 (RSLS…GGGP), 325–683 (PPAA…PAPG), and 803–825 (RHPW…GHGE). A compositionally biased stretch (acidic residues) spans 242 to 251 (TDDEDDDLAD). Low complexity-rich tracts occupy residues 273 to 283 (TRGTSQPAATR), 290 to 303 (PRSS…LRAG), and 350 to 367 (PPAR…VISD). Residues 368–379 (SPPPSPRRPAGP) are compositionally biased toward pro residues. Composition is skewed to low complexity over residues 380–394 (GPLS…QVSS) and 402–439 (PQSS…DAAG). Polar residues predominate over residues 456-468 (RMTQAQTDTQAQS). Over residues 479-491 (GSGGPGAEGGPGV) the composition is skewed to gly residues. Composition is skewed to low complexity over residues 492 to 510 (PRGT…GAAA) and 519 to 540 (DSGP…PLAP). The segment covering 552–563 (RAPDSDSGDRGH) has biased composition (basic and acidic residues). Positions 567-641 (APASAGAAPP…GGSVASASGA (75 aa)) are enriched in low complexity. Over residues 658–667 (GPRKCARKTR) the composition is skewed to basic residues. The segment covering 811–825 (GAPAPAGDAPAGHGE) has biased composition (low complexity).

Auto-ubiquitinated.

It carries out the reaction S-ubiquitinyl-[E2 ubiquitin-conjugating enzyme]-L-cysteine + [acceptor protein]-L-lysine = [E2 ubiquitin-conjugating enzyme]-L-cysteine + N(6)-ubiquitinyl-[acceptor protein]-L-lysine.. Evades nuclear antiviral defenses triggered by dsDNA viruses. Acts during the initial stages of lytic infection and the reactivation of latent viral genome. Prevents the antiviral effect of nuclear bodies by degrading host PML and SP100. Prevents antiviral response to viral DNA induced by IFI16 by degrading it. Additionally, inhibits host IRF3 nuclear signaling to prevent interferon production by the infected cells. In Homo sapiens (Human), this protein is E3 ubiquitin-protein ligase ICP0 (RL2).